We begin with the raw amino-acid sequence, 864 residues long: Mitochondrial 15S rRNA processing factor CCM1 (864 aa).

The N-terminal 76 residues, 1–76, are a transit peptide targeting the mitochondrion; it reads MYMARCGPKN…REFSNTLKER (76 aa). Composition is skewed to polar residues over residues 80 to 94 and 102 to 112; these read TKSV…NSIA and NVNVTKTSSVP. The tract at residues 80–117 is disordered; the sequence is TKSVNSDGHQSNSIAPISEDSRNVNVTKTSSVPNEEKS. PPR repeat units lie at residues 319-353 and 356-390; these read NKQN…STKH and DICT…NIKP.

The protein belongs to the CCM1 family. In terms of assembly, binds to mitochondrial small subunit 15S rRNA.

The protein localises to the mitochondrion. Functionally, regulates mitochondrial small subunit maturation by controlling 15S rRNA 5'-end processing. Localizes to the 5' precursor of the 15S rRNA in a position that is subsequently occupied by mS47 in the mature yeast mtSSU. Uses structure and sequence-specific RNA recognition, binding to a single-stranded region of the precursor and specifically recognizing bases -6 to -1. The exchange of Ccm1 for mS47 is coupled to the irreversible removal of precursor rRNA that is accompanied by conformational changes of the mitoribosomal proteins uS5m and mS26. These conformational changes signal completion of 5'-end rRNA processing through protection of the mature 5'-end of the 15S rRNA and stabilization of mS47. The removal of the 5' precursor together with the dissociation of Ccm1 may be catalyzed by the 5'-3' exoribonuclease Pet127. Involved in the specific removal of group I introns in mitochondrial encoded transcripts. The polypeptide is Mitochondrial 15S rRNA processing factor CCM1 (Saccharomyces cerevisiae (strain ATCC 204508 / S288c) (Baker's yeast)).